We begin with the raw amino-acid sequence, 188 residues long: GMP synthase [glutamine-hydrolyzing] subunit A (188 aa).

The Glutamine amidotransferase type-1 domain occupies 3-188 (PLYVVNNYGQ…FSICTGQNKG (186 aa)). Cys-75 acts as the Nucleophile in catalysis. Active-site residues include His-162 and Glu-164.

Heterodimer composed of a glutamine amidotransferase subunit (A) and a GMP-binding subunit (B).

The catalysed reaction is XMP + L-glutamine + ATP + H2O = GMP + L-glutamate + AMP + diphosphate + 2 H(+). Its pathway is purine metabolism; GMP biosynthesis; GMP from XMP (L-Gln route): step 1/1. Functionally, catalyzes the synthesis of GMP from XMP. The protein is GMP synthase [glutamine-hydrolyzing] subunit A of Methanospirillum hungatei JF-1 (strain ATCC 27890 / DSM 864 / NBRC 100397 / JF-1).